We begin with the raw amino-acid sequence, 152 residues long: Small ribosomal subunit protein uS9 (152 aa).

This sequence belongs to the universal ribosomal protein uS9 family.

This Mycobacterium ulcerans (strain Agy99) protein is Small ribosomal subunit protein uS9.